The chain runs to 466 residues: Muscarinic acetylcholine receptor M2 (466 aa).

The Extracellular segment spans residues 1–22 (MNNSTNSSNSGLALTSPYKTFE). N-linked (GlcNAc...) asparagine glycans are attached at residues Asn2, Asn3, and Asn6. The helical transmembrane segment at 23–45 (VVFIVLVAGSLSLVTIIGNILVM) threads the bilayer. At 46 to 59 (VSIKVNRHLQTVNN) the chain is on the cytoplasmic side. The helical transmembrane segment at 60-80 (YFLFSLACADLIIGVFSMNLY) threads the bilayer. At 81-97 (TLYTVIGYWPLGPVVCD) the chain is on the extracellular side. Residues Cys96 and Cys176 are joined by a disulfide bond. A helical membrane pass occupies residues 98–119 (LWLALDYVVSNASVMNLLIISF). Positions 120-122 (DRY) match the Important for signaling motif. Residues 120 to 139 (DRYFCVTKPLTYPVKRTTKM) are Cytoplasmic-facing. The helical transmembrane segment at 140-162 (AGMMIAAAWVLSFILWAPAILFW) threads the bilayer. The Extracellular segment spans residues 163–184 (QFIVGVRTVEDGECYIQFFSNA). Residues 185-209 (AVTFGTAIAAFYLPVIIMTVLYWHI) traverse the membrane as a helical segment. Over 210-387 (SRASKSRIKK…PPSREKKVTR (178 aa)) the chain is Cytoplasmic. The disordered stretch occupies residues 218–320 (KKDKKEPVAN…SLGHSKDENS (103 aa)). Ser232 is modified (phosphoserine). A compositionally biased stretch (basic and acidic residues) spans 254 to 270 (ALEHNKIQNGKAPRDAV). Polar residues-rich tracts occupy residues 284–293 (NDSTSVSAVA) and 304–313 (DENTVSTSLG). The helical transmembrane segment at 388–410 (TILAILLAFIITWAPYNVMVLIN) threads the bilayer. Residues 411 to 418 (TFCAPCIP) are Extracellular-facing. Cysteines 413 and 416 form a disulfide. A helical transmembrane segment spans residues 419–442 (NTVWTIGYWLCYINSTINPACYAL). The Important for signaling signature appears at 436–440 (NPACY). The Cytoplasmic segment spans residues 443–466 (CNATFKKTFKHLLMCHYKNIGATR). Residues Thr446, Thr450, and Thr465 each carry the phosphothreonine modification.

The protein belongs to the G-protein coupled receptor 1 family. Muscarinic acetylcholine receptor subfamily. CHRM2 sub-subfamily. As to quaternary structure, interacts with ARRB1 and ARRB2. Interacts with RACK1; the interaction regulates CHRM2 internalization. In terms of processing, phosphorylated in response to agonist treatment.

The protein localises to the cell membrane. Its subcellular location is the postsynaptic cell membrane. In terms of biological role, the muscarinic acetylcholine receptor mediates various cellular responses, including inhibition of adenylate cyclase, breakdown of phosphoinositides and modulation of potassium channels through the action of G proteins. Primary transducing effect is adenylate cyclase inhibition. The protein is Muscarinic acetylcholine receptor M2 (CHRM2) of Sus scrofa (Pig).